We begin with the raw amino-acid sequence, 159 residues long: Endoribonuclease YbeY (159 aa).

Residues histidine 125, histidine 129, and histidine 135 each coordinate Zn(2+).

Belongs to the endoribonuclease YbeY family. Requires Zn(2+) as cofactor.

Its subcellular location is the cytoplasm. Functionally, single strand-specific metallo-endoribonuclease involved in late-stage 70S ribosome quality control and in maturation of the 3' terminus of the 16S rRNA. This is Endoribonuclease YbeY from Ligilactobacillus salivarius (strain UCC118) (Lactobacillus salivarius).